Reading from the N-terminus, the 117-residue chain is uncharacterized protein (117 aa).

Residues 57–77 (LGFPLGLLVFLHSLIVARFFV) traverse the membrane as a helical segment.

The protein resides in the membrane. This is an uncharacterized protein from Schizosaccharomyces pombe (strain 972 / ATCC 24843) (Fission yeast).